A 303-amino-acid chain; its full sequence is MKVIFMGTPEFAVPALKKLITHHEVKAVFTQQPKAKGRGLNLAKSPIHQLAFEHQIPVYTPSTLRNDEIINLINKVNADIIVVIAYGFIVPKAILEAKKYGCLNIHPSDLPRHRGAAPLQRTIIEGDRKSSVCIMRMDTGLDTGDILMKEDFDLEERITLEELHNKCANLGAELLIKTLANIDNIVPITQPSDGVTYAHKLTKEEGKINWHESAYKIDCKIRGMNPWPGAYFSYNDKIIKILEAEYLNADHHFTSGTVISDKLEIACGSGILRVKKLQQESKKALNIEEFLRGTNILKDTVLK.

108-111 (SDLP) lines the (6S)-5,6,7,8-tetrahydrofolate pocket.

Belongs to the Fmt family.

The enzyme catalyses L-methionyl-tRNA(fMet) + (6R)-10-formyltetrahydrofolate = N-formyl-L-methionyl-tRNA(fMet) + (6S)-5,6,7,8-tetrahydrofolate + H(+). In terms of biological role, attaches a formyl group to the free amino group of methionyl-tRNA(fMet). The formyl group appears to play a dual role in the initiator identity of N-formylmethionyl-tRNA by promoting its recognition by IF2 and preventing the misappropriation of this tRNA by the elongation apparatus. The protein is Methionyl-tRNA formyltransferase of Rickettsia africae (strain ESF-5).